Consider the following 393-residue polypeptide: Probable protein phosphatase 2C 68 (393 aa).

Positions 56–359 (DFSIAVVQAN…DDITVVVIFI (304 aa)) constitute a PPM-type phosphatase domain. D87, G88, D291, and D350 together coordinate Mn(2+).

The protein belongs to the PP2C family. Requires Mg(2+) as cofactor. Mn(2+) is required as a cofactor.

The catalysed reaction is O-phospho-L-seryl-[protein] + H2O = L-seryl-[protein] + phosphate. The enzyme catalyses O-phospho-L-threonyl-[protein] + H2O = L-threonyl-[protein] + phosphate. Its function is as follows. May dephosphorylate and repress plasma membrane H(+)-ATPases (PM H(+)-ATPases, e.g. AHA1 and AHA2), thus influencing negatively plant growth and fitness. This chain is Probable protein phosphatase 2C 68, found in Arabidopsis thaliana (Mouse-ear cress).